Consider the following 319-residue polypeptide: Acetyl-coenzyme A carboxylase carboxyl transferase subunit alpha (319 aa).

The 262-residue stretch at 35–296 (NIDEEVHRLR…KAQLLADLAD (262 aa)) folds into the CoA carboxyltransferase C-terminal domain.

The protein belongs to the AccA family. Acetyl-CoA carboxylase is a heterohexamer composed of biotin carboxyl carrier protein (AccB), biotin carboxylase (AccC) and two subunits each of ACCase subunit alpha (AccA) and ACCase subunit beta (AccD).

It is found in the cytoplasm. It carries out the reaction N(6)-carboxybiotinyl-L-lysyl-[protein] + acetyl-CoA = N(6)-biotinyl-L-lysyl-[protein] + malonyl-CoA. It participates in lipid metabolism; malonyl-CoA biosynthesis; malonyl-CoA from acetyl-CoA: step 1/1. Component of the acetyl coenzyme A carboxylase (ACC) complex. First, biotin carboxylase catalyzes the carboxylation of biotin on its carrier protein (BCCP) and then the CO(2) group is transferred by the carboxyltransferase to acetyl-CoA to form malonyl-CoA. The protein is Acetyl-coenzyme A carboxylase carboxyl transferase subunit alpha of Citrobacter koseri (strain ATCC BAA-895 / CDC 4225-83 / SGSC4696).